We begin with the raw amino-acid sequence, 234 residues long: ATP-dependent dethiobiotin synthetase BioD (234 aa).

12 to 17 is an ATP binding site; it reads DVGKTF. Residue Thr16 coordinates Mg(2+). Residue Lys37 is part of the active site. A substrate-binding site is contributed by Ser41. ATP is bound by residues Asp52, 118 to 121, and 178 to 179; these read EGAG and SQ. Asp52 and Glu118 together coordinate Mg(2+).

It belongs to the dethiobiotin synthetase family. Homodimer. The cofactor is Mg(2+).

It is found in the cytoplasm. The enzyme catalyses (7R,8S)-7,8-diammoniononanoate + CO2 + ATP = (4R,5S)-dethiobiotin + ADP + phosphate + 3 H(+). The protein operates within cofactor biosynthesis; biotin biosynthesis; biotin from 7,8-diaminononanoate: step 1/2. In terms of biological role, catalyzes a mechanistically unusual reaction, the ATP-dependent insertion of CO2 between the N7 and N8 nitrogen atoms of 7,8-diaminopelargonic acid (DAPA, also called 7,8-diammoniononanoate) to form a ureido ring. The chain is ATP-dependent dethiobiotin synthetase BioD from Phenylobacterium zucineum (strain HLK1).